We begin with the raw amino-acid sequence, 312 residues long: Polyamine aminopropyltransferase (312 aa).

The 241-residue stretch at phenylalanine 7–glutamine 247 folds into the PABS domain. An S-methyl-5'-thioadenosine-binding site is contributed by glutamine 36. Spermidine is bound by residues histidine 67 and glutamate 95. Residues aspartate 115 and aspartate 147 to alanine 148 contribute to the S-methyl-5'-thioadenosine site. Aspartate 165 functions as the Proton acceptor in the catalytic mechanism. Proline 174 contacts S-methyl-5'-thioadenosine.

This sequence belongs to the spermidine/spermine synthase family. In terms of assembly, homodimer or homotetramer.

Its subcellular location is the cytoplasm. It catalyses the reaction S-adenosyl 3-(methylsulfanyl)propylamine + putrescine = S-methyl-5'-thioadenosine + spermidine + H(+). The protein operates within amine and polyamine biosynthesis; spermidine biosynthesis; spermidine from putrescine: step 1/1. Its function is as follows. Catalyzes the irreversible transfer of a propylamine group from the amino donor S-adenosylmethioninamine (decarboxy-AdoMet) to putrescine (1,4-diaminobutane) to yield spermidine. The sequence is that of Polyamine aminopropyltransferase from Synechococcus sp. (strain JA-3-3Ab) (Cyanobacteria bacterium Yellowstone A-Prime).